The following is a 422-amino-acid chain: UDP-N-acetylglucosamine 1-carboxyvinyltransferase (422 aa).

22–23 (KN) provides a ligand contact to phosphoenolpyruvate. R94 provides a ligand contact to UDP-N-acetyl-alpha-D-glucosamine. C118 acts as the Proton donor in catalysis. C118 is modified (2-(S-cysteinyl)pyruvic acid O-phosphothioketal). UDP-N-acetyl-alpha-D-glucosamine is bound by residues 123 to 127 (RPVDL), D308, and I330.

The protein belongs to the EPSP synthase family. MurA subfamily.

The protein localises to the cytoplasm. The catalysed reaction is phosphoenolpyruvate + UDP-N-acetyl-alpha-D-glucosamine = UDP-N-acetyl-3-O-(1-carboxyvinyl)-alpha-D-glucosamine + phosphate. Its pathway is cell wall biogenesis; peptidoglycan biosynthesis. In terms of biological role, cell wall formation. Adds enolpyruvyl to UDP-N-acetylglucosamine. The protein is UDP-N-acetylglucosamine 1-carboxyvinyltransferase of Dinoroseobacter shibae (strain DSM 16493 / NCIMB 14021 / DFL 12).